A 269-amino-acid chain; its full sequence is Tryptophan synthase alpha chain (269 aa).

Residues Glu49 and Asp60 each act as proton acceptor in the active site.

This sequence belongs to the TrpA family. In terms of assembly, tetramer of two alpha and two beta chains.

The catalysed reaction is (1S,2R)-1-C-(indol-3-yl)glycerol 3-phosphate + L-serine = D-glyceraldehyde 3-phosphate + L-tryptophan + H2O. It participates in amino-acid biosynthesis; L-tryptophan biosynthesis; L-tryptophan from chorismate: step 5/5. Functionally, the alpha subunit is responsible for the aldol cleavage of indoleglycerol phosphate to indole and glyceraldehyde 3-phosphate. This Stutzerimonas stutzeri (strain A1501) (Pseudomonas stutzeri) protein is Tryptophan synthase alpha chain.